We begin with the raw amino-acid sequence, 153 residues long: MQILVDADACPVKDIITKNAKKYGIPVIMIIDTSHELNDGYSTVITVDKARDSVDIKLINMVQRGDIVVTQDYGVAAMGLGKGAKVLNQNGLIYSDANIDRLLFERHLGQKIRRAGGRTGTIRKRSKENDEAFEKALLLFIKPESEGPRDLKI.

The protein belongs to the UPF0178 family.

The polypeptide is UPF0178 protein Ccel_2994 (Ruminiclostridium cellulolyticum (strain ATCC 35319 / DSM 5812 / JCM 6584 / H10) (Clostridium cellulolyticum)).